The following is a 955-amino-acid chain: 2-oxoglutarate dehydrogenase E1 component (955 aa).

It belongs to the alpha-ketoglutarate dehydrogenase family. Homodimer. Part of the 2-oxoglutarate dehydrogenase (OGDH) complex composed of E1 (2-oxoglutarate dehydrogenase), E2 (dihydrolipoamide succinyltransferase) and E3 (dihydrolipoamide dehydrogenase); the complex contains multiple copies of the three enzymatic components (E1, E2 and E3). The cofactor is thiamine diphosphate.

The enzyme catalyses N(6)-[(R)-lipoyl]-L-lysyl-[protein] + 2-oxoglutarate + H(+) = N(6)-[(R)-S(8)-succinyldihydrolipoyl]-L-lysyl-[protein] + CO2. Its function is as follows. E1 component of the 2-oxoglutarate dehydrogenase (OGDH) complex which catalyzes the decarboxylation of 2-oxoglutarate, the first step in the conversion of 2-oxoglutarate to succinyl-CoA and CO(2). This Bacillus cereus (strain AH187) protein is 2-oxoglutarate dehydrogenase E1 component.